A 1396-amino-acid chain; its full sequence is DNA-directed RNA polymerase subunit beta' (1396 aa).

The Zn(2+) site is built by C70, C72, C85, and C88. Mg(2+) is bound by residues D460, D462, and D464. Residues C814, C889, C896, and C899 each coordinate Zn(2+).

The protein belongs to the RNA polymerase beta' chain family. The RNAP catalytic core consists of 2 alpha, 1 beta, 1 beta' and 1 omega subunit. When a sigma factor is associated with the core the holoenzyme is formed, which can initiate transcription. Requires Mg(2+) as cofactor. It depends on Zn(2+) as a cofactor.

It catalyses the reaction RNA(n) + a ribonucleoside 5'-triphosphate = RNA(n+1) + diphosphate. Its function is as follows. DNA-dependent RNA polymerase catalyzes the transcription of DNA into RNA using the four ribonucleoside triphosphates as substrates. The chain is DNA-directed RNA polymerase subunit beta' from Hahella chejuensis (strain KCTC 2396).